Consider the following 107-residue polypeptide: DNA polymerase delta subunit 4 (107 aa).

A PCNA-interaction protein motif (PIP box) motif is present at residues 1 to 16 (MGRKRLITDSYPVVKR). The interval 1–44 (MGRKRLITDSYPVVKRREGPAGHSKGELAPELGEEPQPRDEEEA) is disordered. Basic and acidic residues predominate over residues 15–28 (KRREGPAGHSKGEL).

Belongs to the DNA polymerase delta subunit 4 family. In terms of assembly, component of the tetrameric DNA polymerase delta complex (Pol-delta4), which consists of POLD1/p125, POLD2/p50, POLD3/p66/p68 and POLD4/p12, with POLD1 bearing DNA polymerase and 3' to 5' proofreading exonuclease activities. Within this complex, directly interacts with POLD1 and POLD2. Directly interacts with PCNA, as do POLD1 and POLD3; this interaction stimulates Pol-delta4 polymerase activity. As POLD1 and POLD2, directly interacts with WRNIP1; this interaction stimulates DNA polymerase delta-mediated DNA synthesis, independently of the presence of PCNA. This stimulation may be due predominantly to an increase of initiation frequency and also to increased processivity. Upon genotoxic stress induced by DNA damaging agents or by replication stress, POLD4 is proteolytically degraded and Pol-delta4 is converted into a trimeric form of the complex (Pol-delta3) which has an increased proofreading activity. The DNA polymerase delta complex interacts with POLDIP2; this interaction is probably mediated through direct binding to POLD2. Ubiquitinated; undergoes 'Lys-48'-linked ubiquitination in response to UV irradiation, leading to proteasomal degradation. This modification is partly mediated by RNF8 and by the DCX(DTL) E3 ubiquitin ligase complex (also called CRL4(CDT2)). Efficient degradation requires the presence of PCNA and is required for the inhibition of fork progression after DNA damage.

The protein localises to the nucleus. As a component of the tetrameric DNA polymerase delta complex (Pol-delta4), plays a role in high fidelity genome replication and repair. Within this complex, increases the rate of DNA synthesis and decreases fidelity by regulating POLD1 polymerase and proofreading 3' to 5' exonuclease activity. Pol-delta4 participates in Okazaki fragment processing, through both the short flap pathway, as well as a nick translation system. Under conditions of DNA replication stress, required for the repair of broken replication forks through break-induced replication (BIR), a mechanism that may induce segmental genomic duplications of up to 200 kb. Involved in Pol-delta4 translesion synthesis (TLS) of templates carrying O6-methylguanine or abasic sites. Its degradation in response to DNA damage is required for the inhibition of fork progression and cell survival. This chain is DNA polymerase delta subunit 4 (POLD4), found in Homo sapiens (Human).